Consider the following 542-residue polypeptide: GPI alpha-1,2-mannosyltransferase 3 (542 aa).

The segment at 1–36 (MESQAADYNPASRNLHGSSGEMKLRRRKSRQYVSAQ) is disordered. Helical transmembrane passes span 52–72 (LVLFTIALRILNCFLVQTSFV), 125–145 (VQFLIWIPRLGQALLSAVADI), 213–233 (LVALACVVRPTALIPWVPLLF), 244–264 (HLTLHHFLPVGFITFSLSLII), 304–324 (GFPVVLGTHLPFFIHGCFLAP), 327–347 (LHILLLTVLWTLLVYSMLGHK), 351–371 (FIYPVLPFCMVFCGYSLAHLK), and 376–396 (AALSFLLLSNVPLAFYTGLVH). N-linked (GlcNAc...) asparagine glycosylation occurs at Asn-480.

This sequence belongs to the glycosyltransferase 22 family. PIGB subfamily.

It is found in the endoplasmic reticulum membrane. It participates in glycolipid biosynthesis; glycosylphosphatidylinositol-anchor biosynthesis. Alpha-1,2-mannosyltransferase that catalyzes the transfer of the third mannose, via an alpha-1,2 bond, from a dolichol-phosphate-mannose (Dol-P-Man) to an alpha-D-Man-(1-&gt;6)-2-PEtn-alpha-D-Man-(1-&gt;4)-alpha-D-GlcN-(1-&gt;6)-(1-radyl,2-acyl-sn-glycero-3-phospho)-2-acyl-inositol intermediate to generate an alpha-D-Man-(1-&gt;2)-alpha-D-Man-(1-&gt;6)-2-PEtn-alpha-D-Man-(1-&gt;4)-alpha-D-GlcN-(1-&gt;6)-(1-radyl,2-acyl-sn-glycero-3-phospho)-2-acyl-inositol (also termed H6) and participates in the nineth step of the glycosylphosphatidylinositol-anchor biosynthesis. May also add the third mannose to an alpha-D-Man-(1-&gt;6)-alpha-D-Man-(1-&gt;4)-alpha-D-GlcN-(1-&gt;6)-(1-radyl,2-acyl-sn-glycero-3-phospho)-2-acyl-inositol (also termed H3) intermediate generating an alpha-D-Man-(1-&gt;2)-alpha-D-Man-(1-&gt;6)-alpha-D-Man-(1-&gt;4)-alpha-D-GlcN-(1-&gt;6)-(1-radyl,2-acyl-sn-glycero-3-phospho)-2-acyl-inositol (also termed H4). In Mus musculus (Mouse), this protein is GPI alpha-1,2-mannosyltransferase 3.